Reading from the N-terminus, the 397-residue chain is Probable protein phosphatase 2C 74 (397 aa).

In terms of domain architecture, PPM-type phosphatase spans 133-391 (GFWVASRRGL…DDVTVMVVDL (259 aa)). Residues D170, G171, D343, and D382 each contribute to the Mn(2+) site.

This sequence belongs to the PP2C family. The cofactor is Mg(2+). Mn(2+) serves as cofactor.

The catalysed reaction is O-phospho-L-seryl-[protein] + H2O = L-seryl-[protein] + phosphate. The enzyme catalyses O-phospho-L-threonyl-[protein] + H2O = L-threonyl-[protein] + phosphate. The chain is Probable protein phosphatase 2C 74 from Oryza sativa subsp. japonica (Rice).